The primary structure comprises 360 residues: DNA replication and repair protein RecF (360 aa).

An ATP-binding site is contributed by 30–37 (GANGSGKT).

It belongs to the RecF family.

The protein resides in the cytoplasm. The RecF protein is involved in DNA metabolism; it is required for DNA replication and normal SOS inducibility. RecF binds preferentially to single-stranded, linear DNA. It also seems to bind ATP. The sequence is that of DNA replication and repair protein RecF from Acinetobacter baumannii (strain SDF).